The primary structure comprises 191 residues: Holliday junction branch migration complex subunit RuvA (191 aa).

The domain I stretch occupies residues 1–64 (MIGTLSGIIE…DNVPQLYGFT (64 aa)). The segment at 65-145 (DTEEQNCLKM…FNIMDKRGPS (81 aa)) is domain II. Residues 146-149 (VEDS) are flexible linker. Residues 149 to 191 (SDALSALLSLGYEKTRVLNALEKVGVSHNLSDTVRFALKELSK) form a domain III region.

Belongs to the RuvA family. Homotetramer. Forms an RuvA(8)-RuvB(12)-Holliday junction (HJ) complex. HJ DNA is sandwiched between 2 RuvA tetramers; dsDNA enters through RuvA and exits via RuvB. An RuvB hexamer assembles on each DNA strand where it exits the tetramer. Each RuvB hexamer is contacted by two RuvA subunits (via domain III) on 2 adjacent RuvB subunits; this complex drives branch migration. In the full resolvosome a probable DNA-RuvA(4)-RuvB(12)-RuvC(2) complex forms which resolves the HJ.

Its subcellular location is the cytoplasm. Its function is as follows. The RuvA-RuvB-RuvC complex processes Holliday junction (HJ) DNA during genetic recombination and DNA repair, while the RuvA-RuvB complex plays an important role in the rescue of blocked DNA replication forks via replication fork reversal (RFR). RuvA specifically binds to HJ cruciform DNA, conferring on it an open structure. The RuvB hexamer acts as an ATP-dependent pump, pulling dsDNA into and through the RuvAB complex. HJ branch migration allows RuvC to scan DNA until it finds its consensus sequence, where it cleaves and resolves the cruciform DNA. The protein is Holliday junction branch migration complex subunit RuvA of Anaplasma phagocytophilum (strain HZ).